Here is a 411-residue protein sequence, read N- to C-terminus: LIM domain-binding protein 1 (411 aa).

N-acetylserine is present on S2. At T61 the chain carries Phosphothreonine. Residues S265 and S302 each carry the phosphoserine modification. 2 disordered regions span residues 284 to 330 (PPAE…TFAL) and 367 to 411 (DAAN…QASQ). Low complexity predominate over residues 302-318 (SGGSTMSSGGGNTNNSN). Residues 336 to 375 (DVMVVGEPTLMGGEFGDEDERLITRLENTQFDAANGIDDE) enclose the LIM interaction domain (LID) domain.

It belongs to the LDB family. In terms of assembly, interacts with ESR1. Forms homodimers and heterodimers. Interacts with and activates LHX1/LIM1. Interacts with the LIM domains of ISL1 and LMO2. Can assemble in a complex with LMO2 and TAL1/SCL but does not interact with TAL1/SCL directly. Strongly interacts with the LIM2 domain of LMX1A and more weakly with the LIM1 domain. Homodimerization is not required for, and does not effect, LMX1A-binding. Component of a nuclear TAL-1 complex composed at least of CBFA2T3, LDB1, TAL1 and TCF3. Interacts with LHX6 and LHX9. At neuronal promoters, forms a complex with LHX3 involved in the specification of interneurons, in motor neurons, it is displaced by ISL1 to form a ternary complex in which ISL1 contacts both LHX3 and LDB1. Interacts with SLK; leading to negatively regulate SLK kinase activity. Interacts with YWHAZ. Interacts with PRDM1/BLIMP1. Interacts with LMO4. Interacts with RLIM/RNF12; the interaction inhibits the ubiquitination of LMO proteins. In terms of processing, ubiquitinated by RLIM/RNF12, leading to its degradation by the proteasome. As to expression, expressed in multiple adult tissues including heart, brain, liver, kidney, testis, lung and muscle, with expression highest in the pituitary gland and skin.

The protein resides in the nucleus. Binds to the LIM domain of a wide variety of LIM domain-containing transcription factors. May regulate the transcriptional activity of LIM-containing proteins by determining specific partner interactions. Plays a role in the development of interneurons and motor neurons in cooperation with LHX3 and ISL1. Acts synergistically with LHX1/LIM1 in axis formation and activation of gene expression. Acts with LMO2 in the regulation of red blood cell development, maintaining erythroid precursors in an immature state. The chain is LIM domain-binding protein 1 (Ldb1) from Mus musculus (Mouse).